Consider the following 250-residue polypeptide: Probable transcriptional regulatory protein PERMA_0079 (250 aa).

It belongs to the TACO1 family.

It localises to the cytoplasm. In Persephonella marina (strain DSM 14350 / EX-H1), this protein is Probable transcriptional regulatory protein PERMA_0079.